The primary structure comprises 24 residues: Protein YahV (24 aa).

The chain crosses the membrane as a helical span at residues 4-24 (ILLNVLNIVFIGIAIILVIIC).

The protein resides in the cell inner membrane. The protein is Protein YahV of Escherichia coli (strain K12).